The sequence spans 303 residues: Bifunctional protein FolD 2 (303 aa).

NADP(+) contacts are provided by residues 169–171, serine 194, and isoleucine 235; that span reads GRS.

The protein belongs to the tetrahydrofolate dehydrogenase/cyclohydrolase family. As to quaternary structure, homodimer.

It carries out the reaction (6R)-5,10-methylene-5,6,7,8-tetrahydrofolate + NADP(+) = (6R)-5,10-methenyltetrahydrofolate + NADPH. The enzyme catalyses (6R)-5,10-methenyltetrahydrofolate + H2O = (6R)-10-formyltetrahydrofolate + H(+). The protein operates within one-carbon metabolism; tetrahydrofolate interconversion. Catalyzes the oxidation of 5,10-methylenetetrahydrofolate to 5,10-methenyltetrahydrofolate and then the hydrolysis of 5,10-methenyltetrahydrofolate to 10-formyltetrahydrofolate. The chain is Bifunctional protein FolD 2 from Pseudomonas putida (strain GB-1).